Here is an 870-residue protein sequence, read N- to C-terminus: DNA mismatch repair protein MutS (870 aa).

620–627 (GPNMAGKS) contacts ATP.

It belongs to the DNA mismatch repair MutS family.

In terms of biological role, this protein is involved in the repair of mismatches in DNA. It is possible that it carries out the mismatch recognition step. This protein has a weak ATPase activity. The sequence is that of DNA mismatch repair protein MutS from Syntrophotalea carbinolica (strain DSM 2380 / NBRC 103641 / GraBd1) (Pelobacter carbinolicus).